The chain runs to 204 residues: NAD(P)H dehydrogenase (quinone) (204 aa).

In terms of domain architecture, Flavodoxin-like spans 4 to 195; it reads IQIVFYSMYG…AIARFQGAHV (192 aa). Residues 10–15 and 83–85 each bind FMN; these read SMYGHI and TRF. Y12 lines the NAD(+) pocket. W103 contributes to the substrate binding site. FMN contacts are provided by residues 118–124 and H139; that span reads STATQHG.

The protein belongs to the WrbA family. FMN is required as a cofactor.

The enzyme catalyses a quinone + NADH + H(+) = a quinol + NAD(+). The catalysed reaction is a quinone + NADPH + H(+) = a quinol + NADP(+). This chain is NAD(P)H dehydrogenase (quinone), found in Trichlorobacter lovleyi (strain ATCC BAA-1151 / DSM 17278 / SZ) (Geobacter lovleyi).